Consider the following 107-residue polypeptide: Large ribosomal subunit protein mL55 (107 aa).

The N-terminal 16 residues, 1–16, are a transit peptide targeting the mitochondrion; sequence MLLKQLPQAVQQIRCI.

It belongs to the mitochondrion-specific ribosomal protein mL55 family. Component of the mitochondrial ribosome large subunit (39S) which comprises a 16S rRNA and about 50 distinct proteins. Ubiquitously expressed (at protein level).

It localises to the mitochondrion. In terms of biological role, involved in mitochondrial biogenesis and G2/M phase cell cycle progression. This is Large ribosomal subunit protein mL55 (mRpL55) from Drosophila melanogaster (Fruit fly).